The primary structure comprises 338 residues: uncharacterized protein (338 aa).

This is an uncharacterized protein from Schizosaccharomyces pombe (strain 972 / ATCC 24843) (Fission yeast).